Here is a 129-residue protein sequence, read N- to C-terminus: Lysozyme C, milk isozyme (129 aa).

One can recognise a C-type lysozyme domain in the interval 1–129; the sequence is KIFSKCELAR…LSKYLASCNL (129 aa). Intrachain disulfides connect Cys6–Cys127, Cys30–Cys115, Cys65–Cys80, and Cys76–Cys94. Residues Glu35 and Asp53 contribute to the active site. Ca(2+)-binding residues include Lys82, Asp85, Asn87, Asp90, and Asp91.

The protein belongs to the glycosyl hydrolase 22 family. Monomer. It depends on Ca(2+) as a cofactor.

It catalyses the reaction Hydrolysis of (1-&gt;4)-beta-linkages between N-acetylmuramic acid and N-acetyl-D-glucosamine residues in a peptidoglycan and between N-acetyl-D-glucosamine residues in chitodextrins.. Lysozymes have primarily a bacteriolytic function; those in tissues and body fluids are associated with the monocyte-macrophage system and enhance the activity of immunoagents. The sequence is that of Lysozyme C, milk isozyme from Canis lupus familiaris (Dog).